A 274-amino-acid chain; its full sequence is 3-methyl-2-oxobutanoate hydroxymethyltransferase (274 aa).

The Mg(2+) site is built by D50 and D89. 3-methyl-2-oxobutanoate is bound by residues 50–51, D89, and K119; that span reads DS. E121 serves as a coordination point for Mg(2+). E188 acts as the Proton acceptor in catalysis.

Belongs to the PanB family. Homodecamer; pentamer of dimers. It depends on Mg(2+) as a cofactor.

It is found in the cytoplasm. It carries out the reaction 3-methyl-2-oxobutanoate + (6R)-5,10-methylene-5,6,7,8-tetrahydrofolate + H2O = 2-dehydropantoate + (6S)-5,6,7,8-tetrahydrofolate. It participates in cofactor biosynthesis; (R)-pantothenate biosynthesis; (R)-pantoate from 3-methyl-2-oxobutanoate: step 1/2. Catalyzes the reversible reaction in which hydroxymethyl group from 5,10-methylenetetrahydrofolate is transferred onto alpha-ketoisovalerate to form ketopantoate. This chain is 3-methyl-2-oxobutanoate hydroxymethyltransferase, found in Methylorubrum extorquens (strain PA1) (Methylobacterium extorquens).